Reading from the N-terminus, the 672-residue chain is DNA ligase (672 aa).

Residues 30–34, 79–80, and Glu-110 each bind NAD(+); these read DAVYD and SL. Lys-112 functions as the N6-AMP-lysine intermediate in the catalytic mechanism. 4 residues coordinate NAD(+): Arg-133, Glu-170, Lys-287, and Lys-311. Cys-405, Cys-408, Cys-423, and Cys-429 together coordinate Zn(2+). A BRCT domain is found at 590–672; sequence ADELPLSGKT…IALLTEHGAI (83 aa).

It belongs to the NAD-dependent DNA ligase family. LigA subfamily. Mg(2+) serves as cofactor. The cofactor is Mn(2+).

It carries out the reaction NAD(+) + (deoxyribonucleotide)n-3'-hydroxyl + 5'-phospho-(deoxyribonucleotide)m = (deoxyribonucleotide)n+m + AMP + beta-nicotinamide D-nucleotide.. DNA ligase that catalyzes the formation of phosphodiester linkages between 5'-phosphoryl and 3'-hydroxyl groups in double-stranded DNA using NAD as a coenzyme and as the energy source for the reaction. It is essential for DNA replication and repair of damaged DNA. This chain is DNA ligase, found in Marinomonas sp. (strain MWYL1).